A 261-amino-acid chain; its full sequence is Nickel import ATP-binding protein NikD (261 aa).

The ABC transporter domain occupies 6–248 (LRIEGLTIAT…PRHDATRALV (243 aa)). Residue 41 to 48 (GASGSGKS) participates in ATP binding.

It belongs to the ABC transporter superfamily. Nickel importer (TC 3.A.1.5.3) family. As to quaternary structure, the complex is composed of two ATP-binding proteins (NikD and NikE), two transmembrane proteins (NikB and NikC) and a solute-binding protein (NikA).

The protein localises to the cell inner membrane. It carries out the reaction Ni(2+)(out) + ATP + H2O = Ni(2+)(in) + ADP + phosphate + H(+). Part of the ABC transporter complex NikABCDE involved in nickel import. Responsible for energy coupling to the transport system. The sequence is that of Nickel import ATP-binding protein NikD from Rhodospirillum rubrum (strain ATCC 11170 / ATH 1.1.1 / DSM 467 / LMG 4362 / NCIMB 8255 / S1).